Consider the following 170-residue polypeptide: MATPAGGRPSQPQPQAQQLSVDFEALSYISSLVEAFQAFDSDNDGLVTAPELRGLLASLGLDKPEHEVRDMLARADADRDGKLSVEELLDVMNAGQLGLGALGALLQSAVPALESAAGPDGVLGADELARLLSVMGTASVEDCMEIIACMDGDGDGAISVEEFRLMAQLL.

EF-hand domains follow at residues 27-62, 63-98, and 138-170; these read SYIS…LGLD, KPEH…GQLG, and ASVE…AQLL. Ca(2+) contacts are provided by D40, D42, D44, E51, D76, D78, D80, K82, E87, D151, D153, D155, and E162.

Potential calcium sensor. The chain is Probable calcium-binding protein CML29 (CML29) from Oryza sativa subsp. japonica (Rice).